The primary structure comprises 238 residues: Phosphoribosylaminoimidazole-succinocarboxamide synthase (238 aa).

It belongs to the SAICAR synthetase family.

The catalysed reaction is 5-amino-1-(5-phospho-D-ribosyl)imidazole-4-carboxylate + L-aspartate + ATP = (2S)-2-[5-amino-1-(5-phospho-beta-D-ribosyl)imidazole-4-carboxamido]succinate + ADP + phosphate + 2 H(+). Its pathway is purine metabolism; IMP biosynthesis via de novo pathway; 5-amino-1-(5-phospho-D-ribosyl)imidazole-4-carboxamide from 5-amino-1-(5-phospho-D-ribosyl)imidazole-4-carboxylate: step 1/2. The sequence is that of Phosphoribosylaminoimidazole-succinocarboxamide synthase from Alcanivorax borkumensis (strain ATCC 700651 / DSM 11573 / NCIMB 13689 / SK2).